A 390-amino-acid chain; its full sequence is Dual-specificity RNA methyltransferase RlmN (390 aa).

Glu-126 serves as the catalytic Proton acceptor. In terms of domain architecture, Radical SAM core spans 134-374; it reads TEDRGAVCLS…APVRTPRGQD (241 aa). A disulfide bond links Cys-141 and Cys-379. [4Fe-4S] cluster-binding residues include Cys-148, Cys-152, and Cys-155. Residues 205 to 206, Ser-237, 259 to 261, and Asn-336 contribute to the S-adenosyl-L-methionine site; these read GE and SLH. Cys-379 acts as the S-methylcysteine intermediate in catalysis.

It belongs to the radical SAM superfamily. RlmN family. [4Fe-4S] cluster is required as a cofactor.

It is found in the cytoplasm. It carries out the reaction adenosine(2503) in 23S rRNA + 2 reduced [2Fe-2S]-[ferredoxin] + 2 S-adenosyl-L-methionine = 2-methyladenosine(2503) in 23S rRNA + 5'-deoxyadenosine + L-methionine + 2 oxidized [2Fe-2S]-[ferredoxin] + S-adenosyl-L-homocysteine. The enzyme catalyses adenosine(37) in tRNA + 2 reduced [2Fe-2S]-[ferredoxin] + 2 S-adenosyl-L-methionine = 2-methyladenosine(37) in tRNA + 5'-deoxyadenosine + L-methionine + 2 oxidized [2Fe-2S]-[ferredoxin] + S-adenosyl-L-homocysteine. Specifically methylates position 2 of adenine 2503 in 23S rRNA and position 2 of adenine 37 in tRNAs. m2A2503 modification seems to play a crucial role in the proofreading step occurring at the peptidyl transferase center and thus would serve to optimize ribosomal fidelity. The chain is Dual-specificity RNA methyltransferase RlmN from Acidiphilium cryptum (strain JF-5).